Consider the following 331-residue polypeptide: Ferredoxin--NADP reductase (331 aa).

FAD-binding residues include threonine 20, glutamate 39, glutamine 47, tyrosine 52, valine 92, phenylalanine 126, aspartate 287, and serine 328.

This sequence belongs to the ferredoxin--NADP reductase type 2 family. In terms of assembly, homodimer. FAD is required as a cofactor.

It carries out the reaction 2 reduced [2Fe-2S]-[ferredoxin] + NADP(+) + H(+) = 2 oxidized [2Fe-2S]-[ferredoxin] + NADPH. This is Ferredoxin--NADP reductase from Bacillus cereus (strain ZK / E33L).